A 321-amino-acid chain; its full sequence is MIFVYALLALVITFVLVPVLIPTLKRMKFGQSIREEGPQSHMKKTGTPTMGGLTFLLSIVITSLVVIIFVDQANPIILLLFVTIGFGLIGFIDDYIIVVKKNNQGLTSKQKFLAQIGIAIIFFVLSNVFHLVNFSTSIHIPFTNVAIPLSFAYVIFIVFWQVGFSNAVNLTDGLDGLATGLSIIGFTMYAIMSFVLGETAIGIFCIIMLFALLGFLPYNINPAKVFMGDTGSLALGGIFATISIMLNQELSLIFIGLVFVIETLSVMLQVASFKLTGKRIFKMSPIHHHFELIGWSEWKVVTVFWAVGLISGLIGLWIGVH.

10 consecutive transmembrane segments (helical) span residues 1 to 21 (MIFVYALLALVITFVLVPVLI), 50 to 70 (MGGLTFLLSIVITSLVVIIFV), 76 to 96 (IILLLFVTIGFGLIGFIDDYI), 112 to 132 (FLAQIGIAIIFFVLSNVFHLV), 140 to 160 (IPFTNVAIPLSFAYVIFIVFW), 176 to 196 (GLATGLSIIGFTMYAIMSFVL), 200 to 220 (AIGIFCIIMLFALLGFLPYNI), 225 to 245 (VFMGDTGSLALGGIFATISIM), 250 to 270 (LSLIFIGLVFVIETLSVMLQV), and 300 to 320 (VVTVFWAVGLISGLIGLWIGV).

Belongs to the glycosyltransferase 4 family. MraY subfamily. Requires Mg(2+) as cofactor.

It localises to the cell membrane. It carries out the reaction UDP-N-acetyl-alpha-D-muramoyl-L-alanyl-gamma-D-glutamyl-L-lysyl-D-alanyl-D-alanine + di-trans,octa-cis-undecaprenyl phosphate = Mur2Ac(oyl-L-Ala-gamma-D-Glu-L-Lys-D-Ala-D-Ala)-di-trans,octa-cis-undecaprenyl diphosphate + UMP. It functions in the pathway cell wall biogenesis; peptidoglycan biosynthesis. Catalyzes the initial step of the lipid cycle reactions in the biosynthesis of the cell wall peptidoglycan: transfers peptidoglycan precursor phospho-MurNAc-pentapeptide from UDP-MurNAc-pentapeptide onto the lipid carrier undecaprenyl phosphate, yielding undecaprenyl-pyrophosphoryl-MurNAc-pentapeptide, known as lipid I. This is Phospho-N-acetylmuramoyl-pentapeptide-transferase from Staphylococcus aureus (strain MSSA476).